Consider the following 458-residue polypeptide: tRNA-2-methylthio-N(6)-dimethylallyladenosine synthase (458 aa).

The region spanning 3-120 (QKLYIETFGC…LPSMLEQVRC (118 aa)) is the MTTase N-terminal domain. Residues cysteine 12, cysteine 49, cysteine 83, cysteine 157, cysteine 161, and cysteine 164 each coordinate [4Fe-4S] cluster. A Radical SAM core domain is found at 143–375 (RADGPKAFVS…QAKIADNAAK (233 aa)). The region spanning 378–441 (ASMVGSIQSV…PNSLRGRLIG (64 aa)) is the TRAM domain.

The protein belongs to the methylthiotransferase family. MiaB subfamily. Monomer. [4Fe-4S] cluster is required as a cofactor.

Its subcellular location is the cytoplasm. The catalysed reaction is N(6)-dimethylallyladenosine(37) in tRNA + (sulfur carrier)-SH + AH2 + 2 S-adenosyl-L-methionine = 2-methylsulfanyl-N(6)-dimethylallyladenosine(37) in tRNA + (sulfur carrier)-H + 5'-deoxyadenosine + L-methionine + A + S-adenosyl-L-homocysteine + 2 H(+). Its function is as follows. Catalyzes the methylthiolation of N6-(dimethylallyl)adenosine (i(6)A), leading to the formation of 2-methylthio-N6-(dimethylallyl)adenosine (ms(2)i(6)A) at position 37 in tRNAs that read codons beginning with uridine. The polypeptide is tRNA-2-methylthio-N(6)-dimethylallyladenosine synthase (Methylococcus capsulatus (strain ATCC 33009 / NCIMB 11132 / Bath)).